We begin with the raw amino-acid sequence, 243 residues long: Derlin-1.2 (243 aa).

The Cytoplasmic portion of the chain corresponds to 1–20 (MSSPAEYYKSLPPISKAYGT). The helical transmembrane segment at 21-41 (LCFFTTVLVRLHILNPLFLYL) threads the bilayer. Over 42–54 (YYPRVFKKFEVWR) the chain is Lumenal. Residues 55–75 (IFTSFFFLGPFSINFGIRLLM) form a helical membrane-spanning segment. Over 76–94 (IARYGVMLEKGAFDKRTAD) the chain is Cytoplasmic. Residues 95 to 115 (FLWMMIFGAISLLVLSVIPQL) traverse the membrane as a helical segment. At 116–155 (NTYVLGLPMVSMLVYVWSRENPNAQINIYGILQLKAFYLP) the chain is on the lumenal side. The helical transmembrane segment at 156-176 (WVMLLLDVIFGSPLMPGLLGI) threads the bilayer. Residues 177 to 243 (MVGHLYYYFA…FRGRSYRLNQ (67 aa)) lie on the Cytoplasmic side of the membrane.

The protein belongs to the derlin family. As to expression, expressed in roots and endosperm.

It is found in the endoplasmic reticulum membrane. May be involved in the degradation process of specific misfolded endoplasmic reticulum (ER) luminal proteins. This is Derlin-1.2 (DER1.2) from Zea mays (Maize).